A 498-amino-acid chain; its full sequence is MSGYILAIDQGTTSTRSMLFDRNMRVVGLGQQEFTQHFPSSGWVEHDAEEIWKSVQSTIRIALAQAGISAADVAAIGITNQRKTTVVWDRISGKPVHRAIVWQDRRTAQFCDELKRRNLEPLFTEKTGLLLDPYFSGTKLAWLLNHVPGLRERAQKGQVCFGTIDSWLIYKLTGGKAHVTDATNASRTLIYHIGENRWDDELLDILGIPAAMLPEVKDCAADFGMTDPALFGVSIPILGVAGDQQAAVIGNACFEPGMMKSTYGTGCFALLNTGTDRVTSSNRLLTTIAYRLDGVTTYALEGSIFIAGAAVQWLRDEMGFISVASEVSALAEKADPNQRIYLVPAFTGLGAPYWDAEARGAIFGLTRGTGRAEFARAALESVAYQTFDLLEAMQGDWKGATNHTVLRVDGGMVASDWTMQRLADILNAPVDRPVFLETTVLGAAWLAASRAGIWPDRKGFSERWQRDCRFEPAMPEKERESAIAGWRDSVSRCLTRPQ.

T12 lines the ADP pocket. ATP is bound by residues T12, T13, and S14. T12 contributes to the sn-glycerol 3-phosphate binding site. R16 serves as a coordination point for ADP. Sn-glycerol 3-phosphate contacts are provided by R82, Y134, and D243. 4 residues coordinate glycerol: R82, Y134, D243, and Q244. ADP-binding residues include T265 and G308. T265, G308, Q312, and G411 together coordinate ATP. ADP is bound at residue G411.

It belongs to the FGGY kinase family.

The catalysed reaction is glycerol + ATP = sn-glycerol 3-phosphate + ADP + H(+). Its pathway is polyol metabolism; glycerol degradation via glycerol kinase pathway; sn-glycerol 3-phosphate from glycerol: step 1/1. Inhibited by fructose 1,6-bisphosphate (FBP). Its function is as follows. Key enzyme in the regulation of glycerol uptake and metabolism. Catalyzes the phosphorylation of glycerol to yield sn-glycerol 3-phosphate. In Brucella suis (strain ATCC 23445 / NCTC 10510), this protein is Glycerol kinase.